We begin with the raw amino-acid sequence, 205 residues long: Ribonuclease HII (205 aa).

An RNase H type-2 domain is found at Ser15–Lys205. A divalent metal cation contacts are provided by Asp21, Glu22, and Asp117.

Belongs to the RNase HII family. Requires Mn(2+) as cofactor. It depends on Mg(2+) as a cofactor.

It is found in the cytoplasm. It carries out the reaction Endonucleolytic cleavage to 5'-phosphomonoester.. Endonuclease that specifically degrades the RNA of RNA-DNA hybrids. This Chlorobaculum tepidum (strain ATCC 49652 / DSM 12025 / NBRC 103806 / TLS) (Chlorobium tepidum) protein is Ribonuclease HII.